A 427-amino-acid polypeptide reads, in one-letter code: Serine--tRNA ligase (427 aa).

231–233 (TAE) serves as a coordination point for L-serine. An ATP-binding site is contributed by 262 to 264 (RSE). Glu285 serves as a coordination point for L-serine. 349-352 (EISS) contributes to the ATP binding site. Ser385 serves as a coordination point for L-serine.

It belongs to the class-II aminoacyl-tRNA synthetase family. Type-1 seryl-tRNA synthetase subfamily. Homodimer. The tRNA molecule binds across the dimer.

It is found in the cytoplasm. The enzyme catalyses tRNA(Ser) + L-serine + ATP = L-seryl-tRNA(Ser) + AMP + diphosphate + H(+). It catalyses the reaction tRNA(Sec) + L-serine + ATP = L-seryl-tRNA(Sec) + AMP + diphosphate + H(+). It functions in the pathway aminoacyl-tRNA biosynthesis; selenocysteinyl-tRNA(Sec) biosynthesis; L-seryl-tRNA(Sec) from L-serine and tRNA(Sec): step 1/1. Functionally, catalyzes the attachment of serine to tRNA(Ser). Is also able to aminoacylate tRNA(Sec) with serine, to form the misacylated tRNA L-seryl-tRNA(Sec), which will be further converted into selenocysteinyl-tRNA(Sec). The polypeptide is Serine--tRNA ligase (Listeria innocua serovar 6a (strain ATCC BAA-680 / CLIP 11262)).